Here is a 38-residue protein sequence, read N- to C-terminus: MKVRASVKKLCRNCKIIRRDGVVRVICSAEPRHKQRQG.

Belongs to the bacterial ribosomal protein bL36 family.

The chain is Large ribosomal subunit protein bL36 from Stutzerimonas stutzeri (strain A1501) (Pseudomonas stutzeri).